A 360-amino-acid chain; its full sequence is Phospho-N-acetylmuramoyl-pentapeptide-transferase (360 aa).

The next 10 membrane-spanning stretches (helical) occupy residues 27–47 (GALITSALIVFIFGPTIINSL), 71–91 (TPTMGGLMILSGIIGSSLLWA), 93–113 (LSSIYVWVVLLVTLGFGSIGF), 134–154 (LGLEFIIAGIAAWVIMHNGQA), 168–188 (FIINLGWFFIPFSCFVIVGAG), 199–219 (GLAIVPIMIAAASFGVIAYLS), 239–259 (LAVVLGAVIGAGLGFLWFNAP), 262–282 (AIFMGDTGSLAMGGLIGTVAV), 288–308 (IVLVIVGGLFVVEILSVIIQV), and 337–357 (QVVIRFWIIAVILALVGLSTL).

The protein belongs to the glycosyltransferase 4 family. MraY subfamily. Requires Mg(2+) as cofactor.

It localises to the cell inner membrane. The catalysed reaction is UDP-N-acetyl-alpha-D-muramoyl-L-alanyl-gamma-D-glutamyl-meso-2,6-diaminopimeloyl-D-alanyl-D-alanine + di-trans,octa-cis-undecaprenyl phosphate = di-trans,octa-cis-undecaprenyl diphospho-N-acetyl-alpha-D-muramoyl-L-alanyl-D-glutamyl-meso-2,6-diaminopimeloyl-D-alanyl-D-alanine + UMP. The protein operates within cell wall biogenesis; peptidoglycan biosynthesis. In terms of biological role, catalyzes the initial step of the lipid cycle reactions in the biosynthesis of the cell wall peptidoglycan: transfers peptidoglycan precursor phospho-MurNAc-pentapeptide from UDP-MurNAc-pentapeptide onto the lipid carrier undecaprenyl phosphate, yielding undecaprenyl-pyrophosphoryl-MurNAc-pentapeptide, known as lipid I. This Mesorhizobium japonicum (strain LMG 29417 / CECT 9101 / MAFF 303099) (Mesorhizobium loti (strain MAFF 303099)) protein is Phospho-N-acetylmuramoyl-pentapeptide-transferase.